A 659-amino-acid polypeptide reads, in one-letter code: Threonine--tRNA ligase (659 aa).

One can recognise a TGS domain in the interval 3–64 (EKIRITLIDN…LEDGRLEIIT (62 aa)). The interval 249–555 (DHRRLGQEMD…LIEHHAGRFP (307 aa)) is catalytic. Residues C354, H405, and H532 each contribute to the Zn(2+) site.

It belongs to the class-II aminoacyl-tRNA synthetase family. As to quaternary structure, homodimer. It depends on Zn(2+) as a cofactor.

Its subcellular location is the cytoplasm. The catalysed reaction is tRNA(Thr) + L-threonine + ATP = L-threonyl-tRNA(Thr) + AMP + diphosphate + H(+). Catalyzes the attachment of threonine to tRNA(Thr) in a two-step reaction: L-threonine is first activated by ATP to form Thr-AMP and then transferred to the acceptor end of tRNA(Thr). Also edits incorrectly charged L-seryl-tRNA(Thr). The sequence is that of Threonine--tRNA ligase from Zymomonas mobilis subsp. mobilis (strain ATCC 31821 / ZM4 / CP4).